A 485-amino-acid polypeptide reads, in one-letter code: NADH-quinone oxidoreductase subunit N (485 aa).

14 helical membrane passes run 8–28 (LIAL…MLSI), 35–55 (FINT…LYFV), 75–95 (LYIG…YSWL), 104–124 (EFYL…CANH), 125–145 (LASL…LIGY), 159–179 (YMLL…LLYA), 203–223 (ILSG…LVPF), 235–255 (PAPV…AVVI), 271–291 (TVLT…ALTQ), 297–317 (LLGY…VAVQ), 326–346 (VGIY…VVSL), 383–403 (LAGI…VLGV), 406–426 (ELWW…YYYL), and 455–475 (MVVL…QPLI).

This sequence belongs to the complex I subunit 2 family. As to quaternary structure, NDH-1 is composed of 13 different subunits. Subunits NuoA, H, J, K, L, M, N constitute the membrane sector of the complex.

It localises to the cell inner membrane. The enzyme catalyses a quinone + NADH + 5 H(+)(in) = a quinol + NAD(+) + 4 H(+)(out). In terms of biological role, NDH-1 shuttles electrons from NADH, via FMN and iron-sulfur (Fe-S) centers, to quinones in the respiratory chain. The immediate electron acceptor for the enzyme in this species is believed to be ubiquinone. Couples the redox reaction to proton translocation (for every two electrons transferred, four hydrogen ions are translocated across the cytoplasmic membrane), and thus conserves the redox energy in a proton gradient. The chain is NADH-quinone oxidoreductase subunit N from Photorhabdus laumondii subsp. laumondii (strain DSM 15139 / CIP 105565 / TT01) (Photorhabdus luminescens subsp. laumondii).